Here is a 376-residue protein sequence, read N- to C-terminus: Methionine import ATP-binding protein MetN 1 (376 aa).

In terms of domain architecture, ABC transporter spans 34–273 (VRFINLGKTY…PQHEVSKTLL (240 aa)). Residue 70 to 77 (GRSGAGKS) coordinates ATP.

It belongs to the ABC transporter superfamily. Methionine importer (TC 3.A.1.24) family. The complex is composed of two ATP-binding proteins (MetN), two transmembrane proteins (MetI) and a solute-binding protein (MetQ).

It localises to the cell inner membrane. It catalyses the reaction L-methionine(out) + ATP + H2O = L-methionine(in) + ADP + phosphate + H(+). It carries out the reaction D-methionine(out) + ATP + H2O = D-methionine(in) + ADP + phosphate + H(+). In terms of biological role, part of the ABC transporter complex MetNIQ involved in methionine import. Responsible for energy coupling to the transport system. The sequence is that of Methionine import ATP-binding protein MetN 1 from Pseudomonas syringae pv. tomato (strain ATCC BAA-871 / DC3000).